The following is a 150-amino-acid chain: D-aminoacyl-tRNA deacylase (150 aa).

A Gly-cisPro motif, important for rejection of L-amino acids motif is present at residues 137–138; sequence GP.

Belongs to the DTD family. As to quaternary structure, homodimer.

The protein localises to the cytoplasm. It carries out the reaction glycyl-tRNA(Ala) + H2O = tRNA(Ala) + glycine + H(+). The enzyme catalyses a D-aminoacyl-tRNA + H2O = a tRNA + a D-alpha-amino acid + H(+). Its function is as follows. An aminoacyl-tRNA editing enzyme that deacylates mischarged D-aminoacyl-tRNAs. Also deacylates mischarged glycyl-tRNA(Ala), protecting cells against glycine mischarging by AlaRS. Acts via tRNA-based rather than protein-based catalysis; rejects L-amino acids rather than detecting D-amino acids in the active site. By recycling D-aminoacyl-tRNA to D-amino acids and free tRNA molecules, this enzyme counteracts the toxicity associated with the formation of D-aminoacyl-tRNA entities in vivo and helps enforce protein L-homochirality. The sequence is that of D-aminoacyl-tRNA deacylase from Heliobacterium modesticaldum (strain ATCC 51547 / Ice1).